Here is a 202-residue protein sequence, read N- to C-terminus: Ribosomal RNA small subunit methyltransferase G (202 aa).

Residues Gly75, Phe80, 125–126 (VQ), and Arg139 contribute to the S-adenosyl-L-methionine site.

The protein belongs to the methyltransferase superfamily. RNA methyltransferase RsmG family.

The protein localises to the cytoplasm. In terms of biological role, specifically methylates the N7 position of a guanine in 16S rRNA. The sequence is that of Ribosomal RNA small subunit methyltransferase G from Mesomycoplasma hyopneumoniae (strain 232) (Mycoplasma hyopneumoniae).